The primary structure comprises 447 residues: Rab GDP dissociation inhibitor alpha (447 aa).

Ser-427 carries the phosphoserine modification.

Belongs to the Rab GDI family. As to quaternary structure, interacts with RHOH. Interacts with the non-phosphorylated forms of RAB1A, RAB3A, RAB5A, RAB5B, RAB5C, RAB8A, RAB8B, RAB10, RAB12, RAB35, and RAB43. Interacts with RAB3A.

The protein resides in the cytoplasm. It is found in the golgi apparatus. It localises to the trans-Golgi network. Functionally, regulates the GDP/GTP exchange reaction of most Rab proteins by inhibiting the dissociation of GDP from them, and the subsequent binding of GTP to them. Promotes the dissociation of GDP-bound Rab proteins from the membrane and inhibits their activation. Promotes the dissociation of RAB1A, RAB3A, RAB5A and RAB10 from membranes. The polypeptide is Rab GDP dissociation inhibitor alpha (GDI1) (Bos taurus (Bovine)).